Reading from the N-terminus, the 315-residue chain is Taste receptor type 2 member 3 (315 aa).

The Extracellular portion of the chain corresponds to Met1–Asp5. Residues Gly6–Ile26 form a helical membrane-spanning segment. The Cytoplasmic segment spans residues Gly27 to Ser41. A helical membrane pass occupies residues Leu42 to Leu62. Residues Thr63 to His93 lie on the Extracellular side of the membrane. The helical transmembrane segment at Leu94–Ser114 threads the bilayer. At His115–Arg127 the chain is on the cytoplasmic side. Residues Val128–Ile148 form a helical membrane-spanning segment. Residues Asn149 to Thr185 lie on the Extracellular side of the membrane. An N-linked (GlcNAc...) asparagine glycan is attached at Asn165. The helical transmembrane segment at Leu186–Leu206 threads the bilayer. Over Gly207–Arg233 the chain is Cytoplasmic. Residues Ile234–Phe254 traverse the membrane as a helical segment. Topologically, residues Gly255–Lys265 are extracellular. A helical membrane pass occupies residues Met266–Gly286. The Cytoplasmic segment spans residues Asn287 to Ser315.

The protein belongs to the G-protein coupled receptor T2R family.

Its subcellular location is the membrane. Gustducin-coupled receptor implicated in the perception of bitter compounds in the oral cavity and the gastrointestinal tract. Signals through PLCB2 and the calcium-regulated cation channel TRPM5. The protein is Taste receptor type 2 member 3 (TAS2R3) of Papio hamadryas (Hamadryas baboon).